A 715-amino-acid polypeptide reads, in one-letter code: Fatty acid oxidation complex subunit alpha (715 aa).

The tract at residues Met-1–Ala-190 is enoyl-CoA hydratase/isomerase. Asp-297 serves as a coordination point for substrate. Residues His-312–Asn-715 form a 3-hydroxyacyl-CoA dehydrogenase region. Residues Met-325, Asp-344, Val-401–Glu-403, Lys-408, and Ser-430 each bind NAD(+). His-451 acts as the For 3-hydroxyacyl-CoA dehydrogenase activity in catalysis. NAD(+) is bound at residue Asn-454. Residues Asn-501 and Tyr-660 each coordinate substrate.

This sequence in the N-terminal section; belongs to the enoyl-CoA hydratase/isomerase family. The protein in the C-terminal section; belongs to the 3-hydroxyacyl-CoA dehydrogenase family. As to quaternary structure, heterotetramer of two alpha chains (FadB) and two beta chains (FadA).

The enzyme catalyses a (3S)-3-hydroxyacyl-CoA + NAD(+) = a 3-oxoacyl-CoA + NADH + H(+). The catalysed reaction is a (3S)-3-hydroxyacyl-CoA = a (2E)-enoyl-CoA + H2O. It catalyses the reaction a 4-saturated-(3S)-3-hydroxyacyl-CoA = a (3E)-enoyl-CoA + H2O. It carries out the reaction (3S)-3-hydroxybutanoyl-CoA = (3R)-3-hydroxybutanoyl-CoA. The enzyme catalyses a (3Z)-enoyl-CoA = a 4-saturated (2E)-enoyl-CoA. The catalysed reaction is a (3E)-enoyl-CoA = a 4-saturated (2E)-enoyl-CoA. It participates in lipid metabolism; fatty acid beta-oxidation. Its function is as follows. Involved in the aerobic and anaerobic degradation of long-chain fatty acids via beta-oxidation cycle. Catalyzes the formation of 3-oxoacyl-CoA from enoyl-CoA via L-3-hydroxyacyl-CoA. It can also use D-3-hydroxyacyl-CoA and cis-3-enoyl-CoA as substrate. The sequence is that of Fatty acid oxidation complex subunit alpha from Ectopseudomonas oleovorans (Pseudomonas oleovorans).